A 370-amino-acid polypeptide reads, in one-letter code: Phospho-2-dehydro-3-deoxyheptonate aldolase, tyrosine-inhibited (370 aa).

The residue at position 2 (S2) is an N-acetylserine.

This sequence belongs to the class-I DAHP synthase family.

The catalysed reaction is D-erythrose 4-phosphate + phosphoenolpyruvate + H2O = 7-phospho-2-dehydro-3-deoxy-D-arabino-heptonate + phosphate. It functions in the pathway metabolic intermediate biosynthesis; chorismate biosynthesis; chorismate from D-erythrose 4-phosphate and phosphoenolpyruvate: step 1/7. Its activity is regulated as follows. Inhibited by tyrosine. Functionally, stereospecific condensation of phosphoenolpyruvate (PEP) and D-erythrose-4-phosphate (E4P) giving rise to 3-deoxy-D-arabino-heptulosonate-7-phosphate (DAHP). This Saccharomyces cerevisiae (strain ATCC 204508 / S288c) (Baker's yeast) protein is Phospho-2-dehydro-3-deoxyheptonate aldolase, tyrosine-inhibited (ARO4).